Consider the following 572-residue polypeptide: Bilirubin oxidase (572 aa).

The N-terminal stretch at 1-19 (MFKHTLGAAALSLLFNSNA) is a signal peptide. Residues 20–38 (VQASPVPETSPATGHLFKR) constitute a propeptide that is removed on maturation. Plastocyanin-like domains are found at residues 98–194 (VGYD…YMLT) and 404–526 (VAFA…VFVD). Residues His132, His134, His172, His174, His436, His439, His441, His494, Cys495, His496, His500, and Met505 each contribute to the Cu cation site. N-linked (GlcNAc...) asparagine glycans are attached at residues Asn510 and Asn520.

Belongs to the multicopper oxidase family. Requires Cu cation as cofactor.

It catalyses the reaction 2 (4Z,15Z)-bilirubin IXalpha + O2 = 2 biliverdin IXalpha + 2 H2O. In terms of biological role, oxidation of bilirubin and other tetrapyrroles. This chain is Bilirubin oxidase, found in Albifimbria verrucaria (Myrothecium leaf spot and pod blight fungus).